A 232-amino-acid polypeptide reads, in one-letter code: Ribonuclease 3 (232 aa).

The 128-residue stretch at 6–133 (FNDIENRLGV…VIAAVYLDKG (128 aa)) folds into the RNase III domain. E46 provides a ligand contact to Mg(2+). D50 is an active-site residue. Residues D119 and E122 each contribute to the Mg(2+) site. E122 is a catalytic residue. Residues 160 to 229 (DFKTKLQELL…AKEALKRLEK (70 aa)) enclose the DRBM domain.

The protein belongs to the ribonuclease III family. As to quaternary structure, homodimer. Mg(2+) serves as cofactor.

The protein localises to the cytoplasm. The enzyme catalyses Endonucleolytic cleavage to 5'-phosphomonoester.. Digests double-stranded RNA. Involved in the processing of primary rRNA transcript to yield the immediate precursors to the large and small rRNAs (23S and 16S). Processes some mRNAs, and tRNAs when they are encoded in the rRNA operon. Processes pre-crRNA and tracrRNA of type II CRISPR loci if present in the organism. This Clostridium botulinum (strain Alaska E43 / Type E3) protein is Ribonuclease 3.